The following is a 242-amino-acid chain: Agamous-like MADS-box protein AGL8 (242 aa).

In terms of domain architecture, MADS-box spans 3 to 57; sequence RGRVQLKRIENKINRQVTFSKRRSGLLKKAHEISVLCDAEVALIVFSSKGKLFEY. A K-box domain is found at 88-178; the sequence is SENWVLEHAK…LKKIKEREKK (91 aa). Residues 89–178 adopt a coiled-coil conformation; the sequence is ENWVLEHAKL…LKKIKEREKK (90 aa).

Homodimer capable of binding to CArG-box sequences. Vascular tissue of cauline leaves, floral shoot apex and valves of carpels and fruits.

It localises to the nucleus. Its function is as follows. Probable transcription factor that promotes early floral meristem identity in synergy with APETALA1 and CAULIFLOWER. Is required subsequently for the transition of an inflorescence meristem into a floral meristem. Seems to be partially redundant to the function of APETALA1 and CAULIFLOWER in the up-regulation of LEAFY. Is also required for normal pattern of cell division, expansion and differentiation during morphogenesis of the silique. Probably not required for fruit elongation but instead is required to prevent ectopic activity of IND. Represses SAUR10 expression in stems and inflorescence branches. This is Agamous-like MADS-box protein AGL8 (AGL8) from Arabidopsis thaliana (Mouse-ear cress).